The chain runs to 495 residues: Probable cytosol aminopeptidase (495 aa).

Positions 266 and 271 each coordinate Mn(2+). Lys278 is a catalytic residue. Asp289, Asp348, and Glu350 together coordinate Mn(2+). Arg352 is a catalytic residue.

This sequence belongs to the peptidase M17 family. The cofactor is Mn(2+).

Its subcellular location is the cytoplasm. The enzyme catalyses Release of an N-terminal amino acid, Xaa-|-Yaa-, in which Xaa is preferably Leu, but may be other amino acids including Pro although not Arg or Lys, and Yaa may be Pro. Amino acid amides and methyl esters are also readily hydrolyzed, but rates on arylamides are exceedingly low.. The catalysed reaction is Release of an N-terminal amino acid, preferentially leucine, but not glutamic or aspartic acids.. Its function is as follows. Presumably involved in the processing and regular turnover of intracellular proteins. Catalyzes the removal of unsubstituted N-terminal amino acids from various peptides. The polypeptide is Probable cytosol aminopeptidase (Pseudomonas aeruginosa (strain LESB58)).